The primary structure comprises 1382 residues: Insulin receptor (1382 aa).

Residues Met-1–Gly-27 form the signal peptide. Extracellular segments follow at residues His-28–Ser-758 and Ser-763–Lys-956. A disulfide bridge links Cys-35 with Cys-53. 4 N-linked (GlcNAc...) asparagine glycosylation sites follow: Asn-43, Asn-52, Asn-105, and Asn-138. Intrachain disulfides connect Cys-153–Cys-182, Cys-186–Cys-209, Cys-196–Cys-215, Cys-219–Cys-228, Cys-223–Cys-234, Cys-235–Cys-243, Cys-239–Cys-252, Cys-255–Cys-264, and Cys-268–Cys-280. Asn-242 carries an N-linked (GlcNAc...) asparagine glycan. N-linked (GlcNAc...) asparagine glycosylation is present at Asn-282. 5 cysteine pairs are disulfide-bonded: Cys-286-Cys-311, Cys-293-Cys-301, Cys-315-Cys-328, Cys-331-Cys-335, and Cys-339-Cys-360. Residue Asn-322 is glycosylated (N-linked (GlcNAc...) asparagine). N-linked (GlcNAc...) asparagine glycosylation is present at Asn-364. Ser-400 carries the phosphoserine modification. At Tyr-401 the chain carries Phosphotyrosine. Position 407 is a phosphoserine (Ser-407). N-linked (GlcNAc...) asparagine glycosylation is found at Asn-424 and Asn-445. Cys-462 and Cys-495 are joined by a disulfide. Residues Asn-541, Asn-633, Asn-651, and Asn-698 are each glycosylated (N-linked (GlcNAc...) asparagine). The 103-residue stretch at Val-624 to Ser-726 folds into the Fibronectin type-III 1 domain. Disulfide bonds link Cys-674/Cys-899 and Cys-825/Cys-834. Residues Ser-686 to Glu-708 are disordered. Positions Glu-733–Phe-741 are insulin-binding. A disordered region spans residues Thr-746–Asp-766. 2 Fibronectin type-III domains span residues Pro-757–Ala-842 and Ile-853–Tyr-947. 2 N-linked (GlcNAc...) asparagine glycosylation sites follow: Asn-769 and Asn-782. N-linked (GlcNAc...) asparagine glycans are attached at residues Asn-920 and Asn-933. Residues Ile-957 to Leu-979 traverse the membrane as a helical segment. At Arg-980–Ser-1382 the chain is on the cytoplasmic side. 3 positions are modified to phosphotyrosine; by autocatalysis: Tyr-992, Tyr-999, and Tyr-1011. A region of interest (important for interaction with IRS1, SHC1 and STAT5B) is located at residue Tyr-999. One can recognise a Protein kinase domain in the interval Ile-1023–Phe-1298. ATP-binding residues include Ser-1033 and Lys-1057. Residue Lys-1079 forms a Glycyl lysine isopeptide (Lys-Gly) (interchain with G-Cter in ubiquitin) linkage. Residue Cys-1083 is modified to S-nitrosocysteine. Glu-1104 to Asp-1110 is an ATP binding site. Residue Asp-1159 is the Proton donor/acceptor of the active site. ATP contacts are provided by residues Arg-1163 to Asn-1164 and Asp-1177. A phosphotyrosine; by autocatalysis mark is found at Tyr-1185, Tyr-1189, Tyr-1190, Tyr-1355, and Tyr-1361. Positions Pro-1360 to Ser-1382 are disordered. The PIK3R1-binding stretch occupies residues Tyr-1361–Met-1364.

It belongs to the protein kinase superfamily. Tyr protein kinase family. Insulin receptor subfamily. Tetramer of 2 alpha and 2 beta chains linked by disulfide bonds. The alpha chains carry the insulin-binding regions, while the beta chains carry the kinase domain. Forms a hybrid receptor with IGF1R, the hybrid is a tetramer consisting of 1 alpha chain and 1 beta chain of INSR and 1 alpha chain and 1 beta chain of IGF1R. Interacts with SORBS1 but dissociates from it following insulin stimulation. Binds SH2B2. Activated form of INSR interacts (via Tyr-999) with the PTB/PID domains of IRS1 and SHC1. The sequences surrounding the phosphorylated NPXY motif contribute differentially to either IRS1 or SHC1 recognition. Interacts (via tyrosines in the C-terminus) with IRS2 (via PTB domain and 591-786 AA); the 591-786 would be the primary anchor of IRS2 to INSR while the PTB domain would have a stabilizing action on the interaction with INSR. Interacts with the SH2 domains of the 85 kDa regulatory subunit of PI3K (PIK3R1) in vitro, when autophosphorylated on tyrosine residues. Interacts with SOCS7. Interacts (via the phosphorylated Tyr-999), with SOCS3. Interacts (via the phosphorylated Tyr-1185, Tyr-1189, Tyr-1190) with SOCS1. Interacts with CAV2 (tyrosine-phosphorylated form); the interaction is increased with 'Tyr-27'phosphorylation of CAV2. Interacts with ARRB2. Interacts with GRB10; this interaction blocks the association between IRS1/IRS2 and INSR, significantly reduces insulin-stimulated tyrosine phosphorylation of IRS1 and IRS2 and thus decreases insulin signaling. Interacts with GRB7. Interacts with PDPK1. Interacts (via Tyr-1190) with GRB14 (via BPS domain); this interaction protects the tyrosines in the activation loop from dephosphorylation, but promotes dephosphorylation of Tyr-999, this results in decreased interaction with, and phosphorylation of, IRS1. Interacts (via subunit alpha) with ENPP1 (via 485-599 AA); this interaction blocks autophosphorylation. Interacts with PTPRE; this interaction is dependent of Tyr-1185, Tyr-1189 and Tyr-1190 of the INSR. Interacts with STAT5B (via SH2 domain). Interacts with PTPRF. Interacts with ATIC; ATIC together with PRKAA2/AMPK2 and HACD3/PTPLAD1 is proposed to be part of a signaling netwok regulating INSR autophosphorylation and endocytosis. Interacts with the cone snail venom insulin Con-Ins G1. Interacts with the insulin receptor SORL1; this interaction strongly increases its surface exposure, hence strengthens insulin signal reception. Interacts (tyrosine phosphorylated) with CCDC88A/GIV (via SH2-like region); binding requires autophosphorylation of the INSR C-terminal region. Interacts with GNAI3; the interaction is probably mediated by CCDC88A/GIV. Interacts with LMBRD1. Interacts (in response to insulin stimulation) with NCK1; this interaction may recruit PTPN1 to mediate INSR dephosphorylation. Interacts with CD248; this interaction diminishes INSR autophosphorylation. Post-translationally, after being transported from the endoplasmic reticulum to the Golgi apparatus, the single glycosylated precursor is further glycosylated and then cleaved, followed by its transport to the plasma membrane. In terms of processing, autophosphorylated on tyrosine residues in response to insulin. Phosphorylation of Tyr-999 is required for binding to IRS1, SHC1 and STAT5B. Dephosphorylated by PTPRE at Tyr-999, Tyr-1185, Tyr-1189 and Tyr-1190. May also be phosphorylated at Tyr-1185 and Tyr-1190 by mTORC2. Dephosphorylated by PTPRF and PTPN1. Dephosphorylated by PTPN2; down-regulates insulin-induced signaling. Dephosphorylation at Tyr-1189 and Tyr-1190 requires the SH2/SH3 adapter protein NCK1, probably to recruit its interaction partner PTPN1. S-nitrosylation at Cys-1083 by BLVRB inhibits the receptor tyrosine kinase, thereby inhibiting insulin signaling. Post-translationally, ubiquitinated by MARCHF1; leading to degradation thereby reducing surface INSR expression. As to expression, isoform Long and isoform Short are predominantly expressed in tissue targets of insulin metabolic effects: liver, adipose tissue and skeletal muscle but are also expressed in the peripheral nerve, kidney, pulmonary alveoli, pancreatic acini, placenta vascular endothelium, fibroblasts, monocytes, granulocytes, erythrocytes and skin. Isoform Short is preferentially expressed in fetal cells such as fetal fibroblasts, muscle, liver and kidney. Found as a hybrid receptor with IGF1R in muscle, heart, kidney, adipose tissue, skeletal muscle, hepatoma, fibroblasts, spleen and placenta (at protein level). Overexpressed in several tumors, including breast, colon, lung, ovary, and thyroid carcinomas.

It localises to the cell membrane. The protein resides in the late endosome. The protein localises to the lysosome. The enzyme catalyses L-tyrosyl-[protein] + ATP = O-phospho-L-tyrosyl-[protein] + ADP + H(+). Activated in response to insulin. Autophosphorylation activates the kinase activity. PTPN1, PTPRE and PTPRF dephosphorylate important tyrosine residues, thereby reducing INSR activity. Inhibited by ENPP1. GRB10 and GRB14 inhibit the catalytic activity of the INSR, they block access of substrates to the activated receptor. SOCS1 and SOCS3 act as negative regulators of INSR activity, they bind to the activated INRS and interfere with the phosphorylation of INSR substrates. Functionally, receptor tyrosine kinase which mediates the pleiotropic actions of insulin. Binding of insulin leads to phosphorylation of several intracellular substrates, including, insulin receptor substrates (IRS1, 2, 3, 4), SHC, GAB1, CBL and other signaling intermediates. Each of these phosphorylated proteins serve as docking proteins for other signaling proteins that contain Src-homology-2 domains (SH2 domain) that specifically recognize different phosphotyrosine residues, including the p85 regulatory subunit of PI3K and SHP2. Phosphorylation of IRSs proteins lead to the activation of two main signaling pathways: the PI3K-AKT/PKB pathway, which is responsible for most of the metabolic actions of insulin, and the Ras-MAPK pathway, which regulates expression of some genes and cooperates with the PI3K pathway to control cell growth and differentiation. Binding of the SH2 domains of PI3K to phosphotyrosines on IRS1 leads to the activation of PI3K and the generation of phosphatidylinositol-(3, 4, 5)-triphosphate (PIP3), a lipid second messenger, which activates several PIP3-dependent serine/threonine kinases, such as PDPK1 and subsequently AKT/PKB. The net effect of this pathway is to produce a translocation of the glucose transporter SLC2A4/GLUT4 from cytoplasmic vesicles to the cell membrane to facilitate glucose transport. Moreover, upon insulin stimulation, activated AKT/PKB is responsible for: anti-apoptotic effect of insulin by inducing phosphorylation of BAD; regulates the expression of gluconeogenic and lipogenic enzymes by controlling the activity of the winged helix or forkhead (FOX) class of transcription factors. Another pathway regulated by PI3K-AKT/PKB activation is mTORC1 signaling pathway which regulates cell growth and metabolism and integrates signals from insulin. AKT mediates insulin-stimulated protein synthesis by phosphorylating TSC2 thereby activating mTORC1 pathway. The Ras/RAF/MAP2K/MAPK pathway is mainly involved in mediating cell growth, survival and cellular differentiation of insulin. Phosphorylated IRS1 recruits GRB2/SOS complex, which triggers the activation of the Ras/RAF/MAP2K/MAPK pathway. In addition to binding insulin, the insulin receptor can bind insulin-like growth factors (IGFI and IGFII). Isoform Short has a higher affinity for IGFII binding. When present in a hybrid receptor with IGF1R, binds IGF1. PubMed:12138094 shows that hybrid receptors composed of IGF1R and INSR isoform Long are activated with a high affinity by IGF1, with low affinity by IGF2 and not significantly activated by insulin, and that hybrid receptors composed of IGF1R and INSR isoform Short are activated by IGF1, IGF2 and insulin. In contrast, PubMed:16831875 shows that hybrid receptors composed of IGF1R and INSR isoform Long and hybrid receptors composed of IGF1R and INSR isoform Short have similar binding characteristics, both bind IGF1 and have a low affinity for insulin. In adipocytes, inhibits lipolysis. The polypeptide is Insulin receptor (INSR) (Homo sapiens (Human)).